The primary structure comprises 116 residues: FK506-binding protein 1 (116 aa).

Residues glycine 19 to asparagine 116 enclose the PPIase FKBP-type domain.

This sequence belongs to the FKBP-type PPIase family. FKBP1 subfamily.

The protein localises to the cytoplasm. The enzyme catalyses [protein]-peptidylproline (omega=180) = [protein]-peptidylproline (omega=0). Inhibited by both FK506 and rapamycin. PPIases accelerate the folding of proteins. It catalyzes the cis-trans isomerization of proline imidic peptide bonds in oligopeptides. The chain is FK506-binding protein 1 (fpr1) from Aspergillus oryzae (strain ATCC 42149 / RIB 40) (Yellow koji mold).